Consider the following 223-residue polypeptide: Lipoprotein-releasing system ATP-binding protein LolD (223 aa).

Residues 2-223 (IQVRNLKKTF…LRDGEIVTCA (222 aa)) enclose the ABC transporter domain. 38–45 (GVSGAGKT) contacts ATP.

The protein belongs to the ABC transporter superfamily. Lipoprotein translocase (TC 3.A.1.125) family. In terms of assembly, the complex is composed of two ATP-binding proteins (LolD) and two transmembrane proteins (LolC and LolE).

It is found in the cell inner membrane. Functionally, part of the ABC transporter complex LolCDE involved in the translocation of mature outer membrane-directed lipoproteins, from the inner membrane to the periplasmic chaperone, LolA. Responsible for the formation of the LolA-lipoprotein complex in an ATP-dependent manner. The polypeptide is Lipoprotein-releasing system ATP-binding protein LolD (Syntrophus aciditrophicus (strain SB)).